A 245-amino-acid polypeptide reads, in one-letter code: Small ribosomal subunit protein uS2 (245 aa).

This sequence belongs to the universal ribosomal protein uS2 family.

This chain is Small ribosomal subunit protein uS2, found in Pseudomonas putida (strain GB-1).